Reading from the N-terminus, the 268-residue chain is Thymidylate synthase (268 aa).

R27 contributes to the dUMP binding site. H57 serves as a coordination point for (6R)-5,10-methylene-5,6,7,8-tetrahydrofolate. R132 to R133 is a binding site for dUMP. C152 functions as the Nucleophile in the catalytic mechanism. DUMP contacts are provided by residues R172–D175, N183, and H213–Y215. D175 contacts (6R)-5,10-methylene-5,6,7,8-tetrahydrofolate. A267 is a binding site for (6R)-5,10-methylene-5,6,7,8-tetrahydrofolate.

It belongs to the thymidylate synthase family. Bacterial-type ThyA subfamily. As to quaternary structure, homodimer.

The protein resides in the cytoplasm. It carries out the reaction dUMP + (6R)-5,10-methylene-5,6,7,8-tetrahydrofolate = 7,8-dihydrofolate + dTMP. It functions in the pathway pyrimidine metabolism; dTTP biosynthesis. Its function is as follows. Catalyzes the reductive methylation of 2'-deoxyuridine-5'-monophosphate (dUMP) to 2'-deoxythymidine-5'-monophosphate (dTMP) while utilizing 5,10-methylenetetrahydrofolate (mTHF) as the methyl donor and reductant in the reaction, yielding dihydrofolate (DHF) as a by-product. This enzymatic reaction provides an intracellular de novo source of dTMP, an essential precursor for DNA biosynthesis. This Kineococcus radiotolerans (strain ATCC BAA-149 / DSM 14245 / SRS30216) protein is Thymidylate synthase.